The sequence spans 134 residues: Terepressin/terephysin (134 aa).

Residues 1–33 (MKCSVLPRSRLSWTMCVLLLPLLMLMLEGGVQG) form the signal peptide. A disulfide bridge connects residues cysteine 34 and cysteine 39. Residues 44-50 (KRAVDSV) constitute a propeptide that is removed on maturation. 7 disulfides stabilise this stretch: cysteine 56–cysteine 100, cysteine 59–cysteine 73, cysteine 67–cysteine 90, cysteine 74–cysteine 80, cysteine 107–cysteine 121, cysteine 115–cysteine 133, and cysteine 122–cysteine 127.

This sequence belongs to the vasopressin/oxytocin family. In terms of processing, contains 7 disulfide bonds. As to expression, expressed by the venom duct.

It localises to the secreted. This chain is Terepressin/terephysin, found in Terebra subulata (Chocolate spotted auger).